The chain runs to 1003 residues: NACHT, LRR and PYD domains-containing protein 9B (1003 aa).

The Pyrin domain maps to 1–91 (MAGSSGYGLL…SIMAQKKKRH (91 aa)). The NACHT domain maps to 143 to 465 (VTAIVAGTTG…QDKDICVPVI (323 aa)). 149-156 (GTTGEGKT) contributes to the ATP binding site. LRR repeat units lie at residues 749–770 (KVKHLSLVENPLKNKGVMSLCE), 778–799 (VLQSLMLSYCCLTFIACGHLYE), 806–826 (HLSLLDLGSNFLEDTGVNLLC), 835–856 (TLKELWLPGCFLTSQCCEEISA), 863–883 (NLKTLKLGNNNIQDTGVRQLC), 892–913 (NLECLGLDLCEFTSDCCKDLAL), and 920–940 (TLNSLNLDWKTLDHSGLVVLC).

As to quaternary structure, sensor component of NLRP9 inflammasomes. Inflammasomes are supramolecular complexes that assemble in the cytosol in response to pathogens, such as rotavirus, but not encephalomyocarditis virus (EMCV), and play critical roles in innate immunity and inflammation. The core of NLRP9 inflammasomes consists of a signal sensor component (NLRP9), an adapter (ASC/PYCARD), which recruits an effector pro-inflammatory caspase (CASP1). Within the complex, NLRP9 and PYCARD interact via their respective DAPIN/pyrin domains. This interaction initiates speck formation (nucleation) which greatly enhances further addition of soluble PYCARD molecules to the speck in a prion-like polymerization process. Clustered PYCARD nucleates the formation of CASP1 filaments through the interaction of their respective CARD domains, acting as a platform for CASP1 polymerization. CASP1 filament formation increases local enzyme concentration, resulting in trans-autocleavage and activation. Active CASP1 then processes IL1B and IL18 precursors, leading to the release of mature cytokines in the extracellular milieu and inflammatory response. Interacts with DHX9 upon rotavirus infection; this interaction may trigger inflammasome activation and inflammatory response. As to expression, predominantly expressed in the intestine, including proximal and distal colon, cecum, ileum, jejunum and duodenum (at protein level). In the ileum, expressed in epithelial cells. Also expressed in oocytes at all follicular stages and in preimplantation embryos (at protein level). Although expression decreases in preimplantation embryos, it is still detectable in blastocyts.

It localises to the cytoplasm. Its subcellular location is the inflammasome. In terms of biological role, as the sensor component of the NLRP9 inflammasome, plays a crucial role in innate immunity and inflammation. In response to pathogens, including rotavirus, initiates the formation of the inflammasome polymeric complex, made of NLRP9, PYCARD and CASP1. Recruitment of proCASP1 to the inflammasome promotes its activation and CASP1-catalyzed IL1B and IL18 maturation and release in the extracellular milieu. The active cytokines stimulate inflammatory responses. Inflammasomes can also induce pyroptosis, an inflammatory form of programmed cell death. NLRP9 inflammasome activation may be initiated by DHX9 interaction with viral double-stranded RNA (dsRNA), preferentially to short dsRNA segments. The sequence is that of NACHT, LRR and PYD domains-containing protein 9B (Nlrp9b) from Mus musculus (Mouse).